Here is a 575-residue protein sequence, read N- to C-terminus: Developmental and secondary metabolism regulator VEL1 (575 aa).

A Velvet domain is found at 21–225; it reads GRKLKYTLTV…AEQGCRVRIR (205 aa). Positions 35–40 match the Nuclear localization signal motif; the sequence is ERARAC. 2 disordered regions span residues 36–56 and 227–402; these read RARA…VDPP and DVRM…QSYE. Positions 274 to 284 are enriched in basic and acidic residues; the sequence is VHEDPQQRRGS. The span at 294-308 shows a compositional bias: polar residues; sequence VVNTPFRTPSISPST. A compositionally biased stretch (pro residues) spans 334 to 346; that stretch reads IQPPHPPPPPPSS. Polar residues-rich tracts occupy residues 355–365 and 385–402; these read HHNQGPSTQFR and SYSQ…QSYE. The segment at 465–509 is PEST; sequence AEQPLAMSPLASVTSISRGTQNSAPMPSHNYNKLERSGSYSQYAP. The tract at residues 513-549 is disordered; that stretch reads EAPKSTNKRSFNDVFSTPTESLSNGRRPSAIGIDIEE. Positions 516–538 are enriched in polar residues; sequence KSTNKRSFNDVFSTPTESLSNGR.

It belongs to the velvet family. VeA subfamily. In terms of assembly, component of the heterotrimeric velvet complex composed of LAE1, VEL1 and VEL2; VEL1 acting as a bridging protein between LAE1 and VEL2.

The protein resides in the nucleus. It localises to the cytoplasm. In terms of biological role, component of the velvet transcription factor complex that controls sexual/asexual developmental ratio in response to light, promoting sexual development in the darkness while stimulating asexual sporulation under illumination. The velvet complex hat acts as a global regulator for secondary metabolite gene expression. Controls the expression of the oxalic acid and melanin gene clusters. Also controls the expression of proteases and carbohydrate-active enzymes. Involved in the resistance to oxidative stress. Required for full virulence. The chain is Developmental and secondary metabolism regulator VEL1 from Botryotinia fuckeliana (strain B05.10) (Noble rot fungus).